Reading from the N-terminus, the 533-residue chain is Glucose-6-phosphate isomerase (533 aa).

Glu322 acts as the Proton donor in catalysis. Catalysis depends on residues His351 and Lys455.

It belongs to the GPI family.

It is found in the cytoplasm. The enzyme catalyses alpha-D-glucose 6-phosphate = beta-D-fructose 6-phosphate. It functions in the pathway carbohydrate biosynthesis; gluconeogenesis. The protein operates within carbohydrate degradation; glycolysis; D-glyceraldehyde 3-phosphate and glycerone phosphate from D-glucose: step 2/4. Its function is as follows. Catalyzes the reversible isomerization of glucose-6-phosphate to fructose-6-phosphate. The protein is Glucose-6-phosphate isomerase of Desulfitobacterium hafniense (strain DSM 10664 / DCB-2).